We begin with the raw amino-acid sequence, 321 residues long: Phosphate metabolism protein 8 (321 aa).

It belongs to the SSM1 family.

Its function is as follows. May be involved in phosphate metabolism. The sequence is that of Phosphate metabolism protein 8 (PHM8) from Saccharomyces cerevisiae (strain ATCC 204508 / S288c) (Baker's yeast).